The following is a 220-amino-acid chain: MRIVLVGPPGAGKGTQAAFLAKNLGIPHISTGDLFRANISQQTELGKLAKSYMDEGNLVPDEVTIAMAKDRMEQPDAVNGFLLDGFPRNVKQAEALDEMLKSEGMKLDAVLDLEVPEDEVVKRIAGRRICRNDSAHVFHVSYKPPKQEGVCDVCGGELYQRDDDSEETVRRRLEVYHTQTEPIIDYYRAQGLVVTISALGPVEEVTQRAMDALKREDASK.

10–15 (GAGKGT) is a binding site for ATP. The tract at residues 30 to 59 (STGDLFRANISQQTELGKLAKSYMDEGNLV) is NMP. AMP is bound by residues Thr-31, Arg-36, 57–59 (NLV), 85–88 (GFPR), and Gln-92. Positions 126 to 164 (GRRICRNDSAHVFHVSYKPPKQEGVCDVCGGELYQRDDD) are LID. ATP is bound by residues Arg-127 and 137-138 (VF). AMP contacts are provided by Arg-161 and Arg-172. Gly-200 serves as a coordination point for ATP.

The protein belongs to the adenylate kinase family. As to quaternary structure, monomer.

The protein localises to the cytoplasm. It catalyses the reaction AMP + ATP = 2 ADP. Its pathway is purine metabolism; AMP biosynthesis via salvage pathway; AMP from ADP: step 1/1. Catalyzes the reversible transfer of the terminal phosphate group between ATP and AMP. Plays an important role in cellular energy homeostasis and in adenine nucleotide metabolism. This chain is Adenylate kinase, found in Streptomyces avermitilis (strain ATCC 31267 / DSM 46492 / JCM 5070 / NBRC 14893 / NCIMB 12804 / NRRL 8165 / MA-4680).